A 231-amino-acid chain; its full sequence is Ribose-5-phosphate isomerase A (231 aa).

Residues Ser-23 to Thr-26, Asp-80 to Asp-83, and Lys-93 to Gly-96 each bind substrate. Catalysis depends on Glu-102, which acts as the Proton acceptor. Residue Lys-120 participates in substrate binding.

It belongs to the ribose 5-phosphate isomerase family. Homodimer.

It catalyses the reaction aldehydo-D-ribose 5-phosphate = D-ribulose 5-phosphate. It functions in the pathway carbohydrate degradation; pentose phosphate pathway; D-ribose 5-phosphate from D-ribulose 5-phosphate (non-oxidative stage): step 1/1. In terms of biological role, catalyzes the reversible conversion of ribose-5-phosphate to ribulose 5-phosphate. This Prochlorococcus marinus subsp. pastoris (strain CCMP1986 / NIES-2087 / MED4) protein is Ribose-5-phosphate isomerase A.